Reading from the N-terminus, the 387-residue chain is S-adenosylmethionine synthase (387 aa).

His19 is an ATP binding site. Asp21 provides a ligand contact to Mg(2+). Position 47 (Glu47) interacts with K(+). Gln103 lines the L-methionine pocket. The interval 103–113 (QSPDIAQGVEL) is flexible loop. Residues 167 to 169 (DMK), 233 to 234 (RF), Asp242, 248 to 249 (RK), Ala265, and Lys269 each bind ATP. Asp242 is an L-methionine binding site. L-methionine is bound at residue Lys273.

This sequence belongs to the AdoMet synthase family. As to quaternary structure, homotetramer; dimer of dimers. Mg(2+) serves as cofactor. Requires K(+) as cofactor.

The protein localises to the cytoplasm. It catalyses the reaction L-methionine + ATP + H2O = S-adenosyl-L-methionine + phosphate + diphosphate. Its pathway is amino-acid biosynthesis; S-adenosyl-L-methionine biosynthesis; S-adenosyl-L-methionine from L-methionine: step 1/1. Its function is as follows. Catalyzes the formation of S-adenosylmethionine (AdoMet) from methionine and ATP. The overall synthetic reaction is composed of two sequential steps, AdoMet formation and the subsequent tripolyphosphate hydrolysis which occurs prior to release of AdoMet from the enzyme. The sequence is that of S-adenosylmethionine synthase from Mycoplasma mycoides subsp. mycoides SC (strain CCUG 32753 / NCTC 10114 / PG1).